We begin with the raw amino-acid sequence, 208 residues long: MKVVAFERSVQGTGASRRLRNSGKTPAIIYGAGAEPKLIELDHNALYHALKKEAFHSSILDIEVAGKVEKALLRDFQLHPFKQLVLHVDFQRVSAKEKIHVKVPLHFLNQETAPGVKLGHGIVNHILNDVEVSCLPADLPEFIEVDLGTLEIGQTLHIADLKLPKGVTILTHGGDENPAVANISVPAGEKSAAAEEGAAAAGEDKPAA.

Positions 186–201 (PAGEKSAAAEEGAAAA) are enriched in low complexity. A disordered region spans residues 186–208 (PAGEKSAAAEEGAAAAGEDKPAA).

This sequence belongs to the bacterial ribosomal protein bL25 family. CTC subfamily. As to quaternary structure, part of the 50S ribosomal subunit; part of the 5S rRNA/L5/L18/L25 subcomplex. Contacts the 5S rRNA. Binds to the 5S rRNA independently of L5 and L18.

This is one of the proteins that binds to the 5S RNA in the ribosome where it forms part of the central protuberance. The polypeptide is Large ribosomal subunit protein bL25 (Ralstonia pickettii (strain 12J)).